A 211-amino-acid polypeptide reads, in one-letter code: tRNA (guanine-N(7)-)-methyltransferase (211 aa).

Asp-40, Glu-65, Asn-92, and Asp-117 together coordinate S-adenosyl-L-methionine. The active site involves Asp-117. Lys-121 is a binding site for substrate. Residues 123-128 (RHNKRR) are interaction with RNA. Residue Asp-153 coordinates substrate.

The protein belongs to the class I-like SAM-binding methyltransferase superfamily. TrmB family.

It carries out the reaction guanosine(46) in tRNA + S-adenosyl-L-methionine = N(7)-methylguanosine(46) in tRNA + S-adenosyl-L-homocysteine. It functions in the pathway tRNA modification; N(7)-methylguanine-tRNA biosynthesis. Functionally, catalyzes the formation of N(7)-methylguanine at position 46 (m7G46) in tRNA. The polypeptide is tRNA (guanine-N(7)-)-methyltransferase (Synechocystis sp. (strain ATCC 27184 / PCC 6803 / Kazusa)).